A 371-amino-acid chain; its full sequence is DNA replication and repair protein RecF (371 aa).

30–37 (GKNGQGKT) contributes to the ATP binding site.

Belongs to the RecF family.

It localises to the cytoplasm. Functionally, the RecF protein is involved in DNA metabolism; it is required for DNA replication and normal SOS inducibility. RecF binds preferentially to single-stranded, linear DNA. It also seems to bind ATP. The chain is DNA replication and repair protein RecF from Clostridioides difficile (strain 630) (Peptoclostridium difficile).